We begin with the raw amino-acid sequence, 82 residues long: Small ribosomal subunit protein eS27B (82 aa).

A C4-type zinc finger spans residues 37 to 59 (CPGCLNITTVFSHAQTAVTCESC).

It belongs to the eukaryotic ribosomal protein eS27 family. In terms of assembly, component of the small ribosomal subunit (SSU). Mature yeast ribosomes consist of a small (40S) and a large (60S) subunit. The 40S small subunit contains 1 molecule of ribosomal RNA (18S rRNA) and 33 different proteins (encoded by 57 genes). The large 60S subunit contains 3 rRNA molecules (25S, 5.8S and 5S rRNA) and 46 different proteins (encoded by 81 genes). Zn(2+) serves as cofactor. Post-translationally, the N-terminus is not modified.

The protein resides in the cytoplasm. In terms of biological role, component of the ribosome, a large ribonucleoprotein complex responsible for the synthesis of proteins in the cell. The small ribosomal subunit (SSU) binds messenger RNAs (mRNAs) and translates the encoded message by selecting cognate aminoacyl-transfer RNA (tRNA) molecules. The large subunit (LSU) contains the ribosomal catalytic site termed the peptidyl transferase center (PTC), which catalyzes the formation of peptide bonds, thereby polymerizing the amino acids delivered by tRNAs into a polypeptide chain. The nascent polypeptides leave the ribosome through a tunnel in the LSU and interact with protein factors that function in enzymatic processing, targeting, and the membrane insertion of nascent chains at the exit of the ribosomal tunnel. The polypeptide is Small ribosomal subunit protein eS27B (Saccharomyces cerevisiae (strain ATCC 204508 / S288c) (Baker's yeast)).